Reading from the N-terminus, the 129-residue chain is KVFGRCELAAAMKRHGLDNYRGYSLGNWVCAAKFESNFNSQATNRNTDGSTDYGVLQINSRWWCNDGRTPGSRNLCNIPCSALQSSDITATANCAKKIVSDGNGMNAWVAWRKHCKGTDVRVWIKGCRL.

Residues 1–129 (KVFGRCELAA…VRVWIKGCRL (129 aa)) form the C-type lysozyme domain. 4 cysteine pairs are disulfide-bonded: Cys-6–Cys-127, Cys-30–Cys-115, Cys-64–Cys-80, and Cys-76–Cys-94. Catalysis depends on residues Glu-35 and Asp-52.

Belongs to the glycosyl hydrolase 22 family. Monomer.

The protein resides in the secreted. It carries out the reaction Hydrolysis of (1-&gt;4)-beta-linkages between N-acetylmuramic acid and N-acetyl-D-glucosamine residues in a peptidoglycan and between N-acetyl-D-glucosamine residues in chitodextrins.. Lysozymes have primarily a bacteriolytic function; those in tissues and body fluids are associated with the monocyte-macrophage system and enhance the activity of immunoagents. This Numida meleagris (Helmeted guineafowl) protein is Lysozyme C (LYZ).